The primary structure comprises 66 residues: Large ribosomal subunit protein bL33c (66 aa).

The protein belongs to the bacterial ribosomal protein bL33 family.

It is found in the plastid. Its subcellular location is the chloroplast. In Lobularia maritima (Sweet alyssum), this protein is Large ribosomal subunit protein bL33c.